The following is a 168-amino-acid chain: Gastrula zinc finger protein XlCGF42.1 (168 aa).

C2H2-type zinc fingers lie at residues 6–28 (YSCS…RKSH), 34–56 (FCCS…YRTH), 62–84 (CICS…QKYH), 90–112 (FSCS…LRIH), 118–140 (YTCT…LRIH), and 146–165 (FTCS…DRHH).

Belongs to the krueppel C2H2-type zinc-finger protein family.

It is found in the nucleus. May be involved in transcriptional regulation. The sequence is that of Gastrula zinc finger protein XlCGF42.1 from Xenopus laevis (African clawed frog).